A 132-amino-acid polypeptide reads, in one-letter code: Glycerol-3-phosphate cytidylyltransferase (132 aa).

Residues 9–10 and 14–17 contribute to the CTP site; these read TY and HYGH. Substrate is bound at residue K44. K46 is a CTP binding site. K77 is a substrate binding site. Position 113-120 (113-120) interacts with CTP; it reads RTEGISTT.

Belongs to the cytidylyltransferase family. In terms of assembly, homotetramer or homodimer.

It is found in the cytoplasm. It carries out the reaction sn-glycerol 3-phosphate + CTP + H(+) = CDP-glycerol + diphosphate. Its pathway is cell wall biogenesis; poly(ribitol phosphate) teichoic acid biosynthesis. Functionally, catalyzes the transfer of the cytidylyl group of CTP to sn-glycerol 3-phosphate so the activated glycerol 3-phosphate can be used for teichoic acid synthesis, via incorporation into both the linkage unit by TarB and TarF. This Staphylococcus aureus (strain NCTC 8325 / PS 47) protein is Glycerol-3-phosphate cytidylyltransferase.